Reading from the N-terminus, the 263-residue chain is Caveolae-associated protein 3 (263 aa).

An interaction with CAVIN1 region spans residues 1–84 (MGESALEPGP…SNTLAQLLAK (84 aa)). A leucine-zipper region spans residues 20–78 (VHAVTVVTLLEKLATMLEALRERQGGLAERQGGLAGSVRRIQSGLGALSRSHDTTSNTL). Phosphoserine occurs at positions 62 and 70. Lys-128 is covalently cross-linked (Glycyl lysine isopeptide (Lys-Gly) (interchain with G-Cter in SUMO2)). The segment at 135–203 (ARAFQKAPEL…SSRKGSEAAQ (69 aa)) is interaction with CAV1. The disordered stretch occupies residues 141–263 (APELLGPEDQ…RPVLQIESAA (123 aa)). Residues 157–170 (QPEDEVGESSDEEP) show a composition bias toward acidic residues. Phosphoserine occurs at positions 165, 166, 173, and 199. The span at 219-234 (EGPAEGQPAAQPAMEP) shows a compositional bias: low complexity.

The protein belongs to the CAVIN family. Component of the CAVIN complex composed of CAVIN1, CAVIN2, CAVIN3 and CAVIN4. Interacts with PRKCD and with phosphatidylserine. Phosphatidylserine may form a bridge between PKC and PKC-binding partners and stabilize the binding. Interacts with PER2. Interacts with CAVIN1 and EPS15L1. Interacts (via leucine-zipper domain) with CAV1 in a cholesterol-sensitive manner. In terms of processing, in vitro, phosphorylated by PRKCD.

The protein localises to the cytoplasm. Its subcellular location is the membrane. It is found in the caveola. The protein resides in the cytosol. Functionally, regulates the traffic and/or budding of caveolae. Plays a role in caveola formation in a tissue-specific manner. Required for the formation of caveolae in smooth muscle but not in the lung and heart endothelial cells. Regulates the equilibrium between cell surface-associated and cell surface-dissociated caveolae by promoting the rapid release of caveolae from the cell surface. Plays a role in the regulation of the circadian clock. Modulates the period length and phase of circadian gene expression and also regulates expression and interaction of the core clock components PER1/2 and CRY1/2. Seems to have an immune potentiation function, especially in the glioma. The sequence is that of Caveolae-associated protein 3 from Rattus norvegicus (Rat).